The sequence spans 281 residues: Diaminopimelate epimerase (281 aa).

2 residues coordinate substrate: asparagine 13 and asparagine 66. Cysteine 75 functions as the Proton donor in the catalytic mechanism. Substrate-binding positions include glycine 76–asparagine 77, asparagine 164, asparagine 197, and glutamate 215–arginine 216. The Proton acceptor role is filled by cysteine 224. Glycine 225 to threonine 226 contributes to the substrate binding site.

This sequence belongs to the diaminopimelate epimerase family. As to quaternary structure, homodimer.

Its subcellular location is the cytoplasm. The catalysed reaction is (2S,6S)-2,6-diaminopimelate = meso-2,6-diaminopimelate. It functions in the pathway amino-acid biosynthesis; L-lysine biosynthesis via DAP pathway; DL-2,6-diaminopimelate from LL-2,6-diaminopimelate: step 1/1. Catalyzes the stereoinversion of LL-2,6-diaminopimelate (L,L-DAP) to meso-diaminopimelate (meso-DAP), a precursor of L-lysine and an essential component of the bacterial peptidoglycan. The polypeptide is Diaminopimelate epimerase (Gloeothece citriformis (strain PCC 7424) (Cyanothece sp. (strain PCC 7424))).